The sequence spans 379 residues: Chaperone protein DnaJ (379 aa).

The 66-residue stretch at 5 to 70 (DYYEVLGVGK…EKKAAYDQYG (66 aa)) folds into the J domain. Residues 139-217 (GHEAQIRVPH…CHGQGKLKSQ (79 aa)) form a CR-type zinc finger. Positions 152, 155, 169, 172, 191, 194, 205, and 208 each coordinate Zn(2+). CXXCXGXG motif repeat units lie at residues 152 to 159 (CDHCHGNG), 169 to 176 (CPTCHGAG), 191 to 198 (CPKCHGSG), and 205 to 212 (CTKCHGQG). Residues 356–379 (VHEGGSRHSPQEQSWLDKVKSFFS) form a disordered region.

Belongs to the DnaJ family. As to quaternary structure, homodimer. Zn(2+) serves as cofactor.

It is found in the cytoplasm. Its function is as follows. Participates actively in the response to hyperosmotic and heat shock by preventing the aggregation of stress-denatured proteins and by disaggregating proteins, also in an autonomous, DnaK-independent fashion. Unfolded proteins bind initially to DnaJ; upon interaction with the DnaJ-bound protein, DnaK hydrolyzes its bound ATP, resulting in the formation of a stable complex. GrpE releases ADP from DnaK; ATP binding to DnaK triggers the release of the substrate protein, thus completing the reaction cycle. Several rounds of ATP-dependent interactions between DnaJ, DnaK and GrpE are required for fully efficient folding. Also involved, together with DnaK and GrpE, in the DNA replication of plasmids through activation of initiation proteins. In Cupriavidus pinatubonensis (strain JMP 134 / LMG 1197) (Cupriavidus necator (strain JMP 134)), this protein is Chaperone protein DnaJ.